The following is an 821-amino-acid chain: DNA ligase (821 aa).

NAD(+) is bound by residues 33-37, 82-83, and Glu-113; these read DVDYD and SL. The active-site N6-AMP-lysine intermediate is the Lys-115. The NAD(+) site is built by Arg-136, Glu-173, Lys-290, and Lys-314. The Zn(2+) site is built by Cys-408, Cys-411, Cys-426, and Cys-432. The 81-residue stretch at 741–821 folds into the BRCT domain; it reads IVAGPLDGQT…RLLAYLAEHE (81 aa).

The protein belongs to the NAD-dependent DNA ligase family. LigA subfamily. Mg(2+) serves as cofactor. The cofactor is Mn(2+).

The catalysed reaction is NAD(+) + (deoxyribonucleotide)n-3'-hydroxyl + 5'-phospho-(deoxyribonucleotide)m = (deoxyribonucleotide)n+m + AMP + beta-nicotinamide D-nucleotide.. Its function is as follows. DNA ligase that catalyzes the formation of phosphodiester linkages between 5'-phosphoryl and 3'-hydroxyl groups in double-stranded DNA using NAD as a coenzyme and as the energy source for the reaction. It is essential for DNA replication and repair of damaged DNA. The polypeptide is DNA ligase (Stenotrophomonas maltophilia (strain K279a)).